A 926-amino-acid polypeptide reads, in one-letter code: Storkhead-box protein 2 (926 aa).

7 disordered regions span residues 1 to 32 (MKKTRSTTLRRAWPSSDFSDRASDRMRSRSEK), 338 to 393 (EEEK…DIPG), 452 to 529 (EMPF…SYID), 564 to 586 (KEPSSACSLLEPGKTPESMPSYG), 633 to 693 (VKKL…SLDK), 723 to 802 (LLKS…VGTM), and 823 to 926 (TLLT…VTSV). Over residues 18 to 32 (FSDRASDRMRSRSEK) the composition is skewed to basic and acidic residues. Over residues 353–378 (HSGRSKKSRTHRKSHGKSRSHSKTRV) the composition is skewed to basic residues. Basic and acidic residues predominate over residues 379 to 393 (SKGDPSDGSHLDIPG). The segment covering 463 to 472 (SHSKVHRSHS) has biased composition (basic residues). Basic and acidic residues predominate over residues 473-495 (HTQDRRSRNERSNKAKERSRSMD). The span at 518–529 (QDDQTPSQSYID) shows a compositional bias: polar residues. 2 stretches are compositionally biased toward basic and acidic residues: residues 633 to 658 (VKKLSPSERQTPHSSREPVGHKEESP) and 684 to 693 (HSAEPSSLDK). The span at 746–769 (LGTSAAQAMPPSQRQQEPGGNQEA) shows a compositional bias: polar residues. Residues 785–799 (GANKNAEEEKNRDDV) show a composition bias toward basic and acidic residues. Composition is skewed to polar residues over residues 847 to 884 (MDSSSITVDSGFNSPRTRESLASNTSSIVESNRRQNPA) and 914 to 926 (KPSNCLQASVTSV).

This Mus musculus (Mouse) protein is Storkhead-box protein 2 (Stox2).